The following is an 875-amino-acid chain: Alanine--tRNA ligase (875 aa).

Zn(2+) contacts are provided by H564, H568, C666, and H670.

Belongs to the class-II aminoacyl-tRNA synthetase family. In terms of assembly, homotetramer. It depends on Zn(2+) as a cofactor.

Its subcellular location is the cytoplasm. The catalysed reaction is tRNA(Ala) + L-alanine + ATP = L-alanyl-tRNA(Ala) + AMP + diphosphate. Catalyzes the attachment of alanine to tRNA(Ala) in a two-step reaction: alanine is first activated by ATP to form Ala-AMP and then transferred to the acceptor end of tRNA(Ala). Also edits incorrectly charged Ser-tRNA(Ala) and Gly-tRNA(Ala) via its editing domain. The protein is Alanine--tRNA ligase of Yersinia pestis bv. Antiqua (strain Angola).